The sequence spans 72 residues: Translation initiation factor IF-1 (72 aa).

One can recognise an S1-like domain in the interval 1–72 (MAKEEQIELE…TKGRITFRMK (72 aa)).

It belongs to the IF-1 family. In terms of assembly, component of the 30S ribosomal translation pre-initiation complex which assembles on the 30S ribosome in the order IF-2 and IF-3, IF-1 and N-formylmethionyl-tRNA(fMet); mRNA recruitment can occur at any time during PIC assembly.

Its subcellular location is the cytoplasm. Its function is as follows. One of the essential components for the initiation of protein synthesis. Stabilizes the binding of IF-2 and IF-3 on the 30S subunit to which N-formylmethionyl-tRNA(fMet) subsequently binds. Helps modulate mRNA selection, yielding the 30S pre-initiation complex (PIC). Upon addition of the 50S ribosomal subunit IF-1, IF-2 and IF-3 are released leaving the mature 70S translation initiation complex. The sequence is that of Translation initiation factor IF-1 from Alcanivorax borkumensis (strain ATCC 700651 / DSM 11573 / NCIMB 13689 / SK2).